A 176-amino-acid polypeptide reads, in one-letter code: Urease accessory protein UreE (176 aa).

The disordered stretch occupies residues 134-176; the sequence is FTPEGGAYGHGRTHAHEHGHTNHHGQHHDHADHGHSHDHSHDQ. Over residues 161–176 the composition is skewed to basic and acidic residues; it reads HDHADHGHSHDHSHDQ.

It belongs to the UreE family.

Its subcellular location is the cytoplasm. Functionally, involved in urease metallocenter assembly. Binds nickel. Probably functions as a nickel donor during metallocenter assembly. The protein is Urease accessory protein UreE of Ruegeria sp. (strain TM1040) (Silicibacter sp.).